Reading from the N-terminus, the 456-residue chain is MPPDFWERCFWLWGLLLWLSVGSTGDAPPTPQTNCTDFQNANLLRGTNLKVQFLLFTPLDPSCGQLVEESSDIQNSGFNATLGTKLVIHGFRALGTKPSWIDRFIDALLRAADANVIAVDWVYGSTAAYFSAVENVIKLGLEISRFLRKLLALGVSESSIHIIGISLGAHVGGMVGHFYNGQLGQITGLDPAGPEYTRASLEERLDPGDALFVEAIHTDTDNLGIRIPVGHVDYFINGGQDQPGCPTSIYAGYSYLICDHMRAVHLYISALENSCPLVAFPCTNYKDFLAGQCLDCFNPFLLSCPRIGLVEQGGVKIEPLPKEVKVYLLTTSMAPYCVHHSLVEFHLQEPRNKDTCITVTFLSSSVTSSVKITIPRHQRVGKGVLAHPSPQCQINQVKLKLQASHRVWKKDQTTIIGRFCTAPLPVNDNKKMVCLPEPVNLQASETVSHDLKITCI.

The first 25 residues, 1 to 25 (MPPDFWERCFWLWGLLLWLSVGSTG), serve as a signal peptide directing secretion. Asn34 carries N-linked (GlcNAc...) asparagine glycosylation. Catalysis depends on Ser166, which acts as the Nucleophile. The active-site Charge relay system is the Asp190. Cys245 and Cys258 are joined by a disulfide. Residue His260 is the Charge relay system of the active site. 2 disulfides stabilise this stretch: Cys282-Cys293 and Cys296-Cys304.

The protein belongs to the AB hydrolase superfamily. Lipase family.

The protein resides in the secreted. It catalyses the reaction a 1,2-diacyl-sn-glycero-3-phospho-L-serine + H2O = a 2-acyl-sn-glycero-3-phospho-L-serine + a fatty acid + H(+). It carries out the reaction 1,2-di-(9Z)-octadecenoyl-sn-glycero-3-phospho-L-serine + H2O = 2-(9Z-octadecenoyl)-sn-glycero-3-phospho-L-serine + (9Z)-octadecenoate + H(+). The catalysed reaction is 1-hexadecanoyl-2-(5Z,8Z,11Z,14Z-eicosatetraenoyl)-sn-glycero-3-phospho-L-serine + H2O = 2-(5Z,8Z,11Z,14Z)-eicosatetraenoyl-sn-glycero-3-phospho-L-serine + hexadecanoate + H(+). The enzyme catalyses a 1-acyl-sn-glycero-3-phospho-L-serine + H2O = sn-glycero-3-phospho-L-serine + a fatty acid + H(+). It catalyses the reaction 1-(9Z-octadecenoyl)-sn-glycero-3-phospho-L-serine + H2O = sn-glycero-3-phospho-L-serine + (9Z)-octadecenoate + H(+). Hydrolyzes the ester bond of the acyl group attached at the sn-1 position of phosphatidylserines (phospholipase A1 activity) and 1-acyl-2-lysophosphatidylserines (lysophospholipase activity) in the pathway of phosphatidylserines acyl chain remodeling. Cleaves phosphatidylserines exposed on the outer leaflet of the plasma membrane of apoptotic cells producing 2-acyl-1-lysophosphatidylserines, which in turn enhance mast cell activation and histamine production. Has no activity toward other glycerophospholipids including phosphatidylcholines, phosphatidylethanolamines, phosphatidic acids or phosphatidylinositols, or glycerolipids such as triolein. The protein is Phospholipase A1 member A (PLA1A) of Bos taurus (Bovine).